Reading from the N-terminus, the 249-residue chain is Diaminopimelate epimerase (249 aa).

Asn-11 and Asn-60 together coordinate substrate. The Proton donor role is filled by Cys-69. Substrate is bound by residues 70–71 (GN), Asn-164, and 182–183 (ER). Cys-192 (proton acceptor) is an active-site residue. 193-194 (GT) provides a ligand contact to substrate.

Belongs to the diaminopimelate epimerase family. In terms of assembly, homodimer.

Its subcellular location is the cytoplasm. It carries out the reaction (2S,6S)-2,6-diaminopimelate = meso-2,6-diaminopimelate. Its pathway is amino-acid biosynthesis; L-lysine biosynthesis via DAP pathway; DL-2,6-diaminopimelate from LL-2,6-diaminopimelate: step 1/1. In terms of biological role, catalyzes the stereoinversion of LL-2,6-diaminopimelate (L,L-DAP) to meso-diaminopimelate (meso-DAP), a precursor of L-lysine and an essential component of the bacterial peptidoglycan. The sequence is that of Diaminopimelate epimerase from Campylobacter jejuni subsp. doylei (strain ATCC BAA-1458 / RM4099 / 269.97).